The chain runs to 160 residues: 6,7-dimethyl-8-ribityllumazine synthase (160 aa).

Residues phenylalanine 28, 62 to 64 (ALE), and 86 to 88 (AVI) each bind 5-amino-6-(D-ribitylamino)uracil. 91–92 (ET) serves as a coordination point for (2S)-2-hydroxy-3-oxobutyl phosphate. Histidine 94 acts as the Proton donor in catalysis. Asparagine 119 provides a ligand contact to 5-amino-6-(D-ribitylamino)uracil. Arginine 133 serves as a coordination point for (2S)-2-hydroxy-3-oxobutyl phosphate.

Belongs to the DMRL synthase family.

The enzyme catalyses (2S)-2-hydroxy-3-oxobutyl phosphate + 5-amino-6-(D-ribitylamino)uracil = 6,7-dimethyl-8-(1-D-ribityl)lumazine + phosphate + 2 H2O + H(+). The protein operates within cofactor biosynthesis; riboflavin biosynthesis; riboflavin from 2-hydroxy-3-oxobutyl phosphate and 5-amino-6-(D-ribitylamino)uracil: step 1/2. Catalyzes the formation of 6,7-dimethyl-8-ribityllumazine by condensation of 5-amino-6-(D-ribitylamino)uracil with 3,4-dihydroxy-2-butanone 4-phosphate. This is the penultimate step in the biosynthesis of riboflavin. The polypeptide is 6,7-dimethyl-8-ribityllumazine synthase (Nitrosospira multiformis (strain ATCC 25196 / NCIMB 11849 / C 71)).